The following is a 268-amino-acid chain: Dioscorin DB3S (268 aa).

Residues 25–259 form the Alpha-carbonic anhydrase domain; sequence DEFSYIEGNP…TNFRSVFYFE (235 aa). A disulfide bridge links cysteine 50 with cysteine 209. The Proton acceptor role is filled by histidine 91. Residues aspartate 92, 117 to 119, glutamine 136, and 205 to 206 each bind L-ascorbate; these read HFH and TA.

It belongs to the alpha-class carbonic anhydrase family. As to quaternary structure, monomer. Homodimer. In terms of processing, not glycosylated. In terms of tissue distribution, expressed in tuber (at protein level).

It carries out the reaction hydrogencarbonate + H(+) = CO2 + H2O. The catalysed reaction is 2 monodehydro-L-ascorbate radical + NADH + H(+) = 2 L-ascorbate + NAD(+). Its function is as follows. Storage protein of tuber. Involved in protection against oxidative stress. Has carbonate dehydratase and weak trypsin inhibitor activity detected by measuring the dehydration of sodium bicarbonate and the inhibition of trypsin-catalyzed hydrolysis of N-benzoyl-L-arginine-4-nitro anilide, respectively. Contrarily, no carbonate dehydratase or trypsin inhibitor activity detected by measuring the hydrolysis of 4-nitrophenyl acetate or the inhibition of bovine trypsin-catalyzed hydrolysis of N-benzoyl-L-arginine ethyl ester, respectively. Has dehydroascorbate (DHA) reductase and monodehydroascorbate (MDA) reductase activities. Catalyzes the reactions of carbonate dehydratase and DHA reductase independently of zinc and glutathione (GSH). The coupled reaction is capable of recycling a plant antioxidant ascorbate using ubiquitous compounds H(2)O and CO(2). Exhibits antioxidant activity. Able to scavenge 1,1-diphenyl-2-picrylhydrazyl (DPPH) radical and hydroxyl radicals. Exhibits immunomodulatory activity. Activates Toll-like receptor 4 signaling pathways by up-regulating the gene expression of pro-inflammatory cytokines, such as tumor necrosis factor alpha, interleukin-1 beta and interleukin-6, and chemokines RANTES and MCP-1, in mouse RAW 264.7 macrophages. Stimulates the phagocytosis of E.coli by the LPS-treated mouse macrophages. The protein is Dioscorin DB3S of Dioscorea polystachya (Chinese yam).